Consider the following 611-residue polypeptide: UvrABC system protein C (611 aa).

One can recognise a GIY-YIG domain in the interval Gln19–Val97. The 36-residue stretch at Asn207–Val242 folds into the UVR domain.

This sequence belongs to the UvrC family. Interacts with UvrB in an incision complex.

It localises to the cytoplasm. Functionally, the UvrABC repair system catalyzes the recognition and processing of DNA lesions. UvrC both incises the 5' and 3' sides of the lesion. The N-terminal half is responsible for the 3' incision and the C-terminal half is responsible for the 5' incision. This Alkalilimnicola ehrlichii (strain ATCC BAA-1101 / DSM 17681 / MLHE-1) protein is UvrABC system protein C.